Consider the following 107-residue polypeptide: MMKVLVVVALLVTLISYSSSEGIDDLEADELLSLMANEQTRKERIPKHHECTSNKHGCCRGNFFKYKCQCTTVVTQDGEQTERCFCGTPPHHKAAELVVGFGKKIFG.

Positions 1 to 20 (MMKVLVVVALLVTLISYSSS) are cleaved as a signal peptide. Positions 21–41 (EGIDDLEADELLSLMANEQTR) are excised as a propeptide. Disulfide bonds link Cys-51–Cys-68, Cys-58–Cys-86, and Cys-70–Cys-84.

It belongs to the neurotoxin 19 (CSTX) family. 04 (U1-Lctx) subfamily. As to expression, expressed by the venom gland.

The protein resides in the secreted. This chain is U1-lycotoxin-Ls1g, found in Lycosa singoriensis (Wolf spider).